The chain runs to 205 residues: Large ribosomal subunit protein bL25 (205 aa).

The interval 178-205 (FPETEPVEDEESAGEDAQGESEEKAAKE) is disordered. Residues 182–197 (EPVEDEESAGEDAQGE) show a composition bias toward acidic residues.

It belongs to the bacterial ribosomal protein bL25 family. CTC subfamily. Part of the 50S ribosomal subunit; part of the 5S rRNA/L5/L18/L25 subcomplex. Contacts the 5S rRNA. Binds to the 5S rRNA independently of L5 and L18.

In terms of biological role, this is one of the proteins that binds to the 5S RNA in the ribosome where it forms part of the central protuberance. The polypeptide is Large ribosomal subunit protein bL25 (Cutibacterium acnes (strain DSM 16379 / KPA171202) (Propionibacterium acnes)).